The sequence spans 221 residues: Deoxyribose-phosphate aldolase (221 aa).

Residue aspartate 91 is the Proton donor/acceptor of the active site. The active-site Schiff-base intermediate with acetaldehyde is lysine 153. Catalysis depends on lysine 182, which acts as the Proton donor/acceptor.

Belongs to the DeoC/FbaB aldolase family. DeoC type 1 subfamily.

It localises to the cytoplasm. It carries out the reaction 2-deoxy-D-ribose 5-phosphate = D-glyceraldehyde 3-phosphate + acetaldehyde. It participates in carbohydrate degradation; 2-deoxy-D-ribose 1-phosphate degradation; D-glyceraldehyde 3-phosphate and acetaldehyde from 2-deoxy-alpha-D-ribose 1-phosphate: step 2/2. Catalyzes a reversible aldol reaction between acetaldehyde and D-glyceraldehyde 3-phosphate to generate 2-deoxy-D-ribose 5-phosphate. This chain is Deoxyribose-phosphate aldolase, found in Clostridium botulinum (strain Alaska E43 / Type E3).